Here is a 468-residue protein sequence, read N- to C-terminus: UDP-N-acetylmuramoylalanine--D-glutamate ligase (468 aa).

127–133 (GTNGKTT) lines the ATP pocket.

The protein belongs to the MurCDEF family.

It is found in the cytoplasm. The catalysed reaction is UDP-N-acetyl-alpha-D-muramoyl-L-alanine + D-glutamate + ATP = UDP-N-acetyl-alpha-D-muramoyl-L-alanyl-D-glutamate + ADP + phosphate + H(+). The protein operates within cell wall biogenesis; peptidoglycan biosynthesis. Cell wall formation. Catalyzes the addition of glutamate to the nucleotide precursor UDP-N-acetylmuramoyl-L-alanine (UMA). In Prochlorococcus marinus (strain MIT 9312), this protein is UDP-N-acetylmuramoylalanine--D-glutamate ligase.